The primary structure comprises 308 residues: Pyrroline-5-carboxylate reductase 3 (308 aa).

This sequence belongs to the pyrroline-5-carboxylate reductase family. Homodecamer; composed of 5 homodimers.

It is found in the cytoplasm. The catalysed reaction is L-proline + NADP(+) = (S)-1-pyrroline-5-carboxylate + NADPH + 2 H(+). The enzyme catalyses L-proline + NAD(+) = (S)-1-pyrroline-5-carboxylate + NADH + 2 H(+). Its pathway is amino-acid biosynthesis; L-proline biosynthesis; L-proline from L-glutamate 5-semialdehyde: step 1/1. In terms of biological role, oxidoreductase that catalyzes the last step in proline biosynthesis, which corresponds to the reduction of pyrroline-5-carboxylate (P5C) to L-proline using NAD(P)H. Proline is synthesized from either glutamate or ornithine; both are converted to P5C, and then to proline via pyrroline-5-carboxylate reductases (PYCRs). PYCR3 is exclusively linked to the biosynthesis of proline from ornithine. In Bos taurus (Bovine), this protein is Pyrroline-5-carboxylate reductase 3.